The chain runs to 360 residues: Peptide chain release factor 1 (360 aa).

Gln-235 bears the N5-methylglutamine mark.

Belongs to the prokaryotic/mitochondrial release factor family. Methylated by PrmC. Methylation increases the termination efficiency of RF1.

Its subcellular location is the cytoplasm. Peptide chain release factor 1 directs the termination of translation in response to the peptide chain termination codons UAG and UAA. The protein is Peptide chain release factor 1 of Burkholderia cenocepacia (strain HI2424).